The sequence spans 219 residues: RPA-interacting protein (219 aa).

At S18 the chain carries Phosphoserine. An RIP-type zinc finger spans residues 137 to 212 (CPVCIKYNLR…PSLLMNCLTC (76 aa)). A mediates nuclear export region spans residues 164 to 180 (STDLTEQKLRACLEENV).

Interacts with the RPA1 subunit of RPA complex. Post-translationally, sumoylated; required for localization in the nuclear PML body and transport of RPA complex in PML body. Upon UV irradiation and during S phase, it is desumoylated, releasing RPA complex that is translocated to sites of DNA damage. Sumoylation takes place at different Lys residues.

It localises to the nucleus. Its function is as follows. Mediates the import of RPA complex into the nucleus, possibly via some interaction with importin beta. Sumoylation mediates the localization of RPA complex into the PML body of the nucleus, thereby participating in RPA function in DNA metabolism. The polypeptide is RPA-interacting protein (Rpain) (Mus musculus (Mouse)).